The primary structure comprises 249 residues: ATP synthase subunit a, chloroplastic (249 aa).

5 consecutive transmembrane segments (helical) span residues 40–60 (QVLI…VLAI), 97–117 (VPFI…GALL), 136–156 (INTT…AGLS), 201–221 (LVVV…VMFL), and 222–242 (GLFT…AYIG).

It belongs to the ATPase A chain family. In terms of assembly, F-type ATPases have 2 components, CF(1) - the catalytic core - and CF(0) - the membrane proton channel. CF(1) has five subunits: alpha(3), beta(3), gamma(1), delta(1), epsilon(1). CF(0) has four main subunits: a, b, b' and c.

Its subcellular location is the plastid. The protein localises to the chloroplast thylakoid membrane. Functionally, key component of the proton channel; it plays a direct role in the translocation of protons across the membrane. The chain is ATP synthase subunit a, chloroplastic from Capsella bursa-pastoris (Shepherd's purse).